We begin with the raw amino-acid sequence, 444 residues long: Tol-Pal system protein TolB (444 aa).

The first 26 residues, methionine 1–alanine 26, serve as a signal peptide directing secretion. Residues isoleucine 281–glycine 310 are compositionally biased toward polar residues. Residues isoleucine 281 to serine 311 are disordered.

This sequence belongs to the TolB family. The Tol-Pal system is composed of five core proteins: the inner membrane proteins TolA, TolQ and TolR, the periplasmic protein TolB and the outer membrane protein Pal. They form a network linking the inner and outer membranes and the peptidoglycan layer.

It localises to the periplasm. Its function is as follows. Part of the Tol-Pal system, which plays a role in outer membrane invagination during cell division and is important for maintaining outer membrane integrity. In Cereibacter sphaeroides (strain ATCC 17029 / ATH 2.4.9) (Rhodobacter sphaeroides), this protein is Tol-Pal system protein TolB.